The chain runs to 118 residues: Basic phospholipase A2 CM-II (118 aa).

Disulfide bonds link C11-C70, C26-C117, C28-C44, C43-C98, C50-C91, C59-C84, and C77-C89. Ca(2+) contacts are provided by Y27, G29, and G31. H47 is a catalytic residue. D48 lines the Ca(2+) pocket. D92 is an active-site residue.

Belongs to the phospholipase A2 family. Group I subfamily. D49 sub-subfamily. Requires Ca(2+) as cofactor. As to expression, expressed by the venom gland.

It localises to the secreted. It carries out the reaction a 1,2-diacyl-sn-glycero-3-phosphocholine + H2O = a 1-acyl-sn-glycero-3-phosphocholine + a fatty acid + H(+). Functionally, snake venom phospholipase A2 (PLA2) that causes myonecrosis when injected intramuscularly, causes neuromuscular blockade with a gradual contracture and a decreased sensitivity to ACh and KCl (in the chick biventer cervicis nerve-muscle preparation), abolishes twitches evoked by indirect stimulation earlier than those by direct stimulation (in the mouse phrenic nerve-diaphragm preparation), shows indirect hemolytic activity, and shows weak anticoagulant activity. PLA2 catalyzes the calcium-dependent hydrolysis of the 2-acyl groups in 3-sn-phosphoglycerides. The chain is Basic phospholipase A2 CM-II from Naja mossambica (Mozambique spitting cobra).